The sequence spans 208 residues: Interleukin-6 (208 aa).

Residues Met1 to Pro29 form the signal peptide. Asn38 carries an N-linked (GlcNAc...) asparagine glycan. A disulfide bridge connects residues Cys72 and Cys78. Ser81 is subject to Phosphoserine. A disulfide bridge links Cys101 with Cys111.

It belongs to the IL-6 superfamily. In terms of assembly, component of a hexamer of two molecules each of IL6, IL6R and IL6ST; first binds to IL6R to associate with the signaling subunit IL6ST. Interacts with IL6R (via the N-terminal ectodomain); this interaction may be affected by IL6R-binding with SORL1, hence decreasing IL6 cis signaling. Interacts with SORL1 (via the N-terminal ectodomain); this interaction leads to IL6 internalization and lysosomal degradation. May form a trimeric complex with the soluble SORL1 ectodomain and soluble IL6R receptor; this interaction might stabilize circulating IL6, hence promoting IL6 trans signaling.

The protein resides in the secreted. In terms of biological role, cytokine with a wide variety of biological functions in immunity, tissue regeneration, and metabolism. Binds to IL6R, then the complex associates to the signaling subunit IL6ST/gp130 to trigger the intracellular IL6-signaling pathway. The interaction with the membrane-bound IL6R and IL6ST stimulates 'classic signaling', whereas the binding of IL6 and soluble IL6R to IL6ST stimulates 'trans-signaling'. Alternatively, 'cluster signaling' occurs when membrane-bound IL6:IL6R complexes on transmitter cells activate IL6ST receptors on neighboring receiver cells. IL6 is a potent inducer of the acute phase response. Rapid production of IL6 contributes to host defense during infection and tissue injury, but excessive IL6 synthesis is involved in disease pathology. In the innate immune response, is synthesized by myeloid cells, such as macrophages and dendritic cells, upon recognition of pathogens through toll-like receptors (TLRs) at the site of infection or tissue injury. In the adaptive immune response, is required for the differentiation of B cells into immunoglobulin-secreting cells. Plays a major role in the differentiation of CD4(+) T cell subsets. Essential factor for the development of T follicular helper (Tfh) cells that are required for the induction of germinal-center formation. Required to drive naive CD4(+) T cells to the Th17 lineage. Also required for proliferation of myeloma cells and the survival of plasmablast cells. Functionally, acts as an essential factor in bone homeostasis and on vessels directly or indirectly by induction of VEGF, resulting in increased angiogenesis activity and vascular permeability. Induces, through 'trans-signaling' and synergistically with IL1B and TNF, the production of VEGF. Involved in metabolic controls, is discharged into the bloodstream after muscle contraction increasing lipolysis and improving insulin resistance. 'Trans-signaling' in central nervous system also regulates energy and glucose homeostasis. Mediates, through GLP-1, crosstalk between insulin-sensitive tissues, intestinal L cells and pancreatic islets to adapt to changes in insulin demand. Also acts as a myokine. Plays a protective role during liver injury, being required for maintenance of tissue regeneration. Also has a pivotal role in iron metabolism by regulating HAMP/hepcidin expression upon inflammation or bacterial infection. Through activation of IL6ST-YAP-NOTCH pathway, induces inflammation-induced epithelial regeneration. The chain is Interleukin-6 (IL6) from Capra hircus (Goat).